The primary structure comprises 79 residues: Small ribosomal subunit protein bS18 (79 aa).

Belongs to the bacterial ribosomal protein bS18 family. In terms of assembly, part of the 30S ribosomal subunit. Forms a tight heterodimer with protein bS6.

Functionally, binds as a heterodimer with protein bS6 to the central domain of the 16S rRNA, where it helps stabilize the platform of the 30S subunit. This is Small ribosomal subunit protein bS18 from Bacillus licheniformis (strain ATCC 14580 / DSM 13 / JCM 2505 / CCUG 7422 / NBRC 12200 / NCIMB 9375 / NCTC 10341 / NRRL NRS-1264 / Gibson 46).